Consider the following 349-residue polypeptide: Biotin synthase (349 aa).

The segment covering 1–11 (MLEGIEREAAE) has biased composition (basic and acidic residues). The segment at 1 to 30 (MLEGIEREAAEHSNGCSGPAGHAPPAGAPR) is disordered. The 220-residue stretch at 64–283 (HEVQLCTLLS…IAVARVMMPR (220 aa)) folds into the Radical SAM core domain. Cysteine 79, cysteine 83, and cysteine 86 together coordinate [4Fe-4S] cluster. Positions 123, 155, 215, and 287 each coordinate [2Fe-2S] cluster.

This sequence belongs to the radical SAM superfamily. Biotin synthase family. Homodimer. Requires [4Fe-4S] cluster as cofactor. [2Fe-2S] cluster is required as a cofactor.

It carries out the reaction (4R,5S)-dethiobiotin + (sulfur carrier)-SH + 2 reduced [2Fe-2S]-[ferredoxin] + 2 S-adenosyl-L-methionine = (sulfur carrier)-H + biotin + 2 5'-deoxyadenosine + 2 L-methionine + 2 oxidized [2Fe-2S]-[ferredoxin]. Its pathway is cofactor biosynthesis; biotin biosynthesis; biotin from 7,8-diaminononanoate: step 2/2. In terms of biological role, catalyzes the conversion of dethiobiotin (DTB) to biotin by the insertion of a sulfur atom into dethiobiotin via a radical-based mechanism. The protein is Biotin synthase of Sorangium cellulosum (strain So ce56) (Polyangium cellulosum (strain So ce56)).